A 91-amino-acid chain; its full sequence is Large ribosomal subunit protein bL27 (91 aa).

Over residues 1–13 (MATKKSGGSSCNG) the composition is skewed to polar residues. The interval 1–20 (MATKKSGGSSCNGRDSRGRR) is disordered.

The protein belongs to the bacterial ribosomal protein bL27 family.

The polypeptide is Large ribosomal subunit protein bL27 (Anaplasma phagocytophilum (strain HZ)).